We begin with the raw amino-acid sequence, 588 residues long: L-fucose isomerase (588 aa).

Active-site proton acceptor residues include Glu335 and Asp359. Positions 335, 359, and 525 each coordinate Mn(2+).

The protein belongs to the L-fucose isomerase family. Requires Mn(2+) as cofactor.

Its subcellular location is the cytoplasm. It catalyses the reaction L-fucose = L-fuculose. Its pathway is carbohydrate degradation; L-fucose degradation; L-lactaldehyde and glycerone phosphate from L-fucose: step 1/3. Functionally, converts the aldose L-fucose into the corresponding ketose L-fuculose. This Streptococcus pneumoniae (strain Taiwan19F-14) protein is L-fucose isomerase.